A 274-amino-acid chain; its full sequence is MTDTLFADVSEYQVPVNNSYPYRVLSIRVCDGTYRDRNFAHNYRWMRSAFDSGRLTFGIVYTYARPNWWANANTVRSMIDAAGGLHPRVALMLDVESGGNPPGDGSSWINRLYWNLADYAGSPVRIIGYANAYDFFNMWRVRPAGLRVIGAGYGSNPNLPGQVAHQYTDGSGYSPNLPQGAPPFGRCDMNSANGLTPQQFAAACGVTTTGGPLMALTDEEQTELLTKVREIWDQLRGPNGAGWPQLGQNEQGQDLTPVDAIAVIKNDVAAMLAE.

This is an uncharacterized protein from Mycobacterium tuberculosis (strain ATCC 25618 / H37Rv).